Reading from the N-terminus, the 1096-residue chain is Inactive phospholipase C-like protein 1 (1096 aa).

The interval 1–101 is disordered; sequence MAEGAASREA…KKTVSFSSMP (101 aa). Residues 26–41 are compositionally biased toward low complexity; that stretch reads GADAASGDAAPEASGG. S48 and S78 each carry phosphoserine. An interaction with PPP1C region spans residues 83–222; it reads PSNQKCGGRK…NIWVSGLRYL (140 aa). Residue T94 is modified to Phosphothreonine. S96 carries the phosphoserine modification. One can recognise a PH domain in the interval 114-224; it reads SFMQAGCELK…WVSGLRYLVS (111 aa). A PI-PLC X-box domain is found at 399–543; the sequence is QDMTQPLSHY…LKHMIIVKGK (145 aa). Residues 544 to 568 form an interaction with GABA A beta subunit region; the sequence is KLPSESDLLEGEVTDEDEEAEMSRR. Position 557 is a phosphothreonine (T557). S570 bears the Phosphoserine mark. In terms of domain architecture, PI-PLC Y-box spans 586–702; sequence LSDLVSICKS…GYVLRPSIMR (117 aa). In terms of domain architecture, C2 spans 702–831; it reads RDEVSYFSAN…PGYRHVPLRS (130 aa). Residues 1040–1060 adopt a coiled-coil conformation; it reads DLLKNAKNEAVENIKQIQLAC. Residues 1067-1096 are disordered; sequence KGPGSAAEAKGKRSLEAIEEKESSEENGKL. Residues 1075–1096 are compositionally biased toward basic and acidic residues; sequence AKGKRSLEAIEEKESSEENGKL. At S1080 the chain carries Phosphoserine.

The protein belongs to the PRIP family. As to quaternary structure, interacts with PPP2CA, GABA receptor beta subunits, GABA receptor gamma-2 subunits. Interacts with Ins(1,4,5)P3, Ins(1,4,5,6)P4, GABARAP, and PPP1C. May form a ternary complex with GABA receptor beta subunit and GABARAP. The formation of a ternary complex with GABA receptor beta subunit and GABARAP could be the key step for facilitating the association of GABARAP with the GABA receptor gamma-2 subunit and to allow it to be transported at the right destination. In terms of processing, phosphorylation of Thr-94 resulted in dissociation of PPP1C from PRIP1. In vitro, phosphorylated by the catalytic subunit of PKA. In terms of tissue distribution, expressed in brain. Found in the granular cell and Purkinje cell layers in the cerebellum; and in the hippocampal pyramidal cells, dentate granule cells and pyramidal granule cells of the cerebral cortex in the cerebrum.

Its subcellular location is the cytoplasm. In terms of biological role, involved in an inositol phospholipid-based intracellular signaling cascade. Shows no PLC activity to phosphatidylinositol 4,5-bisphosphate and phosphatidylinositol. Component in the phospho-dependent endocytosis process of GABA A receptor. Acts as an inhibitor of PPP1C. This Rattus norvegicus (Rat) protein is Inactive phospholipase C-like protein 1 (Plcl1).